Consider the following 282-residue polypeptide: Acetyl-coenzyme A carboxylase carboxyl transferase subunit beta (282 aa).

The region spanning Gly26 to His282 is the CoA carboxyltransferase N-terminal domain.

This sequence belongs to the AccD/PCCB family. In terms of assembly, acetyl-CoA carboxylase is a heterohexamer composed of biotin carboxyl carrier protein (AccB), biotin carboxylase (AccC) and two subunits each of ACCase subunit alpha (AccA) and ACCase subunit beta (AccD).

Its subcellular location is the cytoplasm. The catalysed reaction is N(6)-carboxybiotinyl-L-lysyl-[protein] + acetyl-CoA = N(6)-biotinyl-L-lysyl-[protein] + malonyl-CoA. The protein operates within lipid metabolism; malonyl-CoA biosynthesis; malonyl-CoA from acetyl-CoA: step 1/1. Functionally, component of the acetyl coenzyme A carboxylase (ACC) complex. Biotin carboxylase (BC) catalyzes the carboxylation of biotin on its carrier protein (BCCP) and then the CO(2) group is transferred by the transcarboxylase to acetyl-CoA to form malonyl-CoA. This Flavobacteriaceae bacterium (strain 3519-10) protein is Acetyl-coenzyme A carboxylase carboxyl transferase subunit beta.